Reading from the N-terminus, the 263-residue chain is tRNA uridine(34) hydroxylase (263 aa).

The 95-residue stretch at 129–223 (EGREVVTLDT…YFEETDGAFY (95 aa)) folds into the Rhodanese domain. Cys-183 (cysteine persulfide intermediate) is an active-site residue.

The protein belongs to the TrhO family.

It catalyses the reaction uridine(34) in tRNA + AH2 + O2 = 5-hydroxyuridine(34) in tRNA + A + H2O. In terms of biological role, catalyzes oxygen-dependent 5-hydroxyuridine (ho5U) modification at position 34 in tRNAs. The protein is tRNA uridine(34) hydroxylase of Delftia acidovorans (strain DSM 14801 / SPH-1).